A 454-amino-acid chain; its full sequence is tRNA modification GTPase MnmE (454 aa).

(6S)-5-formyl-5,6,7,8-tetrahydrofolate-binding residues include Arg-23, Glu-80, and Lys-120. In terms of domain architecture, TrmE-type G spans 216–377; the sequence is GMKVVIAGRP…LRSHLKEAMG (162 aa). K(+) is bound at residue Asn-226. GTP is bound by residues 226 to 231, 245 to 251, 270 to 273, and 358 to 360; these read NAGKSS, TDIAGTT, DTAG, and SAR. Residue Ser-230 coordinates Mg(2+). Residues Thr-245, Ile-247, and Thr-250 each coordinate K(+). Residue Thr-251 participates in Mg(2+) binding. Lys-454 provides a ligand contact to (6S)-5-formyl-5,6,7,8-tetrahydrofolate.

This sequence belongs to the TRAFAC class TrmE-Era-EngA-EngB-Septin-like GTPase superfamily. TrmE GTPase family. As to quaternary structure, homodimer. Heterotetramer of two MnmE and two MnmG subunits. It depends on K(+) as a cofactor.

The protein resides in the cytoplasm. Exhibits a very high intrinsic GTPase hydrolysis rate. Involved in the addition of a carboxymethylaminomethyl (cmnm) group at the wobble position (U34) of certain tRNAs, forming tRNA-cmnm(5)s(2)U34. In Proteus mirabilis (strain HI4320), this protein is tRNA modification GTPase MnmE.